The following is a 498-amino-acid chain: Death-associated inhibitor of apoptosis 2 (498 aa).

BIR repeat units lie at residues 12 to 77, 116 to 180, and 215 to 280; these read RLAT…SMVL, RLVT…PRVQ, and RLRT…QFVL. 4 residues coordinate Zn(2+): Cys249, Cys252, His269, and Cys276. The RING-type zinc finger occupies 451–486; sequence CKVCLDEEVGVVFLPCGHLATCNQCAPSVANCPMCR.

This sequence belongs to the IAP family. Interacts with the caspase Strica. Interacts (via BIR2 domain) with rpr and grim. Interacts (via the BIR2 and BIR3 domains) with hid. Interacts (via BIR3 domain) with Drice. Interacts with Dredd; likely to bind Dredd simultaneously with Fadd to form a trimeric complex. In terms of processing, caspase-dependent cleavage is required for suppression of Drice-mediated cell death. Expressed in both principal and stellar cells of the Malphigian tubules.

The protein localises to the nucleus. Its subcellular location is the cytoplasm. Required for activation of NF-kappaB transcription factors in the immune deficiency (Imd) signaling cascade which is essential for innate immune responses upon infection by Gram-negative bacteria. Promotes cytoplasmic cleavage of Rel and its translocation to the nucleus where it drives expression of antimicrobial peptides. Binds, polyubiquitinates and activates Dredd which is required for Rel-mediated induction of antimicrobial peptides. Anti-apoptotic protein which binds, ubiquitinates and inactivates the effector caspase Drice. Suppresses rpr and hid-dependent cell death in the eye. However, has also been shown to have little, if any, role in the regulation of the canonical caspase-dependent apoptosis pathway. Plays a role in regulating the expression of ion channels. The polypeptide is Death-associated inhibitor of apoptosis 2 (Diap2) (Drosophila melanogaster (Fruit fly)).